A 154-amino-acid chain; its full sequence is Peptide deformylase (154 aa).

Residues C90 and H132 each contribute to the Fe cation site. E133 is a catalytic residue. Residue H136 participates in Fe cation binding.

This sequence belongs to the polypeptide deformylase family. The cofactor is Fe(2+).

It carries out the reaction N-terminal N-formyl-L-methionyl-[peptide] + H2O = N-terminal L-methionyl-[peptide] + formate. In terms of biological role, removes the formyl group from the N-terminal Met of newly synthesized proteins. Requires at least a dipeptide for an efficient rate of reaction. N-terminal L-methionine is a prerequisite for activity but the enzyme has broad specificity at other positions. The polypeptide is Peptide deformylase (Halothermothrix orenii (strain H 168 / OCM 544 / DSM 9562)).